A 181-amino-acid polypeptide reads, in one-letter code: Large ribosomal subunit protein uL6 (181 aa).

This sequence belongs to the universal ribosomal protein uL6 family. Part of the 50S ribosomal subunit.

Functionally, this protein binds to the 23S rRNA, and is important in its secondary structure. It is located near the subunit interface in the base of the L7/L12 stalk, and near the tRNA binding site of the peptidyltransferase center. The protein is Large ribosomal subunit protein uL6 of Synechococcus sp. (strain JA-3-3Ab) (Cyanobacteria bacterium Yellowstone A-Prime).